A 289-amino-acid chain; its full sequence is Homeobox protein Nkx-2.6 (289 aa).

Disordered stretches follow at residues 75–125 and 259–289; these read GSNP…PQRK and TPLA…VTAW. The segment at residues 123–182 is a DNA-binding region (homeobox); that stretch reads QRKSRVLFSQAQVLALERRFKQQRYLTAPEREHLASALQLTSTQVKIWFQNRRYKSKSQR. Residues 261 to 274 are compositionally biased toward polar residues; sequence LASSGFSPGGQSAA.

Belongs to the NK-2 homeobox family. Not detected in any neonate or adult tissues.

It is found in the nucleus. Functionally, acts as a transcriptional activator. In conjunction with NKX2-5, may play a role in both pharyngeal and cardiac embryonic development. The protein is Homeobox protein Nkx-2.6 (Nkx2-6) of Mus musculus (Mouse).